A 469-amino-acid polypeptide reads, in one-letter code: tRNA modification GTPase MnmE (469 aa).

Arginine 26, glutamate 88, and arginine 127 together coordinate (6S)-5-formyl-5,6,7,8-tetrahydrofolate. The region spanning 222 to 390 (GLKVAIVGRP…LEDAILHLVQ (169 aa)) is the TrmE-type G domain. Residue asparagine 232 participates in K(+) binding. GTP is bound by residues 232–237 (NVGKSS), 251–257 (TDLPGTT), 276–279 (DTAG), and 344–347 (NKAD). Serine 236 serves as a coordination point for Mg(2+). K(+)-binding residues include threonine 251, leucine 253, and threonine 256. Threonine 257 contributes to the Mg(2+) binding site. Lysine 469 is a binding site for (6S)-5-formyl-5,6,7,8-tetrahydrofolate.

This sequence belongs to the TRAFAC class TrmE-Era-EngA-EngB-Septin-like GTPase superfamily. TrmE GTPase family. Homodimer. Heterotetramer of two MnmE and two MnmG subunits. Requires K(+) as cofactor.

The protein resides in the cytoplasm. In terms of biological role, exhibits a very high intrinsic GTPase hydrolysis rate. Involved in the addition of a carboxymethylaminomethyl (cmnm) group at the wobble position (U34) of certain tRNAs, forming tRNA-cmnm(5)s(2)U34. The protein is tRNA modification GTPase MnmE of Synechococcus elongatus.